A 436-amino-acid polypeptide reads, in one-letter code: Voltage-gated potassium channel regulatory subunit KCNG3 (436 aa).

The Cytoplasmic portion of the chain corresponds to 1–168; the sequence is MTFGRSGAAS…RTFEEPTSSL (168 aa). A helical membrane pass occupies residues 169-190; the sequence is AAQILASVSVVFVIVSMVVLCA. Residues 191 to 220 are Extracellular-facing; the sequence is STLPDWRNAAADNRSLDDRSRYSAGPGREP. A helical transmembrane segment spans residues 221-242; it reads SGIIEAICIGWFTAECIVRFIV. The Cytoplasmic portion of the chain corresponds to 243–253; the sequence is SKNKCEFVKRP. The helical transmembrane segment at 254 to 274 threads the bilayer; that stretch reads LNIIDLLAITPYYISVLMTVF. Residues 275–284 lie on the Extracellular side of the membrane; that stretch reads TGENSQLQRA. Residues 285–305 form a helical; Voltage-sensor membrane-spanning segment; it reads GVTLRVLRMMRIFWVIKLARH. Residues 306-320 lie on the Cytoplasmic side of the membrane; sequence FIGLQTLGLTLKRCY. Residues 321-342 traverse the membrane as a helical segment; it reads REMVMLLVFICVAMAIFSALSQ. The Extracellular segment spans residues 343–360; that stretch reads LLEHGLDLETSNKDFTSI. Positions 361-372 form an intramembrane region, helical; that stretch reads PAACWWVIISMT. The Selectivity filter motif lies at 373–378; the sequence is TVGYGD. The stretch at 373-380 is an intramembrane region; that stretch reads TVGYGDMY. Over 381 to 387 the chain is Extracellular; the sequence is PITVPGR. Residues 388 to 416 traverse the membrane as a helical segment; that stretch reads ILGGVCVVSGIVLLALPITFIYHSFVQCY. Topologically, residues 417 to 436 are cytoplasmic; sequence HELKFRSARYSRSLSTEFLN.

It belongs to the potassium channel family. G (TC 1.A.1.2) subfamily. Kv6.3/KCNG3 sub-subfamily. Heterotetramer with KCNB1. Does not form homomultimers. In terms of tissue distribution, expressed in the brain, liver, testis, small intestine, colon, thymus and adrenal gland.

It localises to the cell membrane. Its subcellular location is the cytoplasm. Its function is as follows. Regulatory subunit of the voltage-gated potassium (Kv) channel which, when coassembled with KCNB1, modulates the kinetics parameters of the heterotetrameric channel namely the inactivation and deactivation rate. Potassium channel subunit that does not form functional channels by itself. Reduces the deactivation rate. Moderately accelerates activation. In Homo sapiens (Human), this protein is Voltage-gated potassium channel regulatory subunit KCNG3.